A 129-amino-acid polypeptide reads, in one-letter code: Small ribosomal subunit protein uS11 (129 aa).

It belongs to the universal ribosomal protein uS11 family. In terms of assembly, part of the 30S ribosomal subunit. Interacts with proteins S7 and S18. Binds to IF-3.

Functionally, located on the platform of the 30S subunit, it bridges several disparate RNA helices of the 16S rRNA. Forms part of the Shine-Dalgarno cleft in the 70S ribosome. In Carboxydothermus hydrogenoformans (strain ATCC BAA-161 / DSM 6008 / Z-2901), this protein is Small ribosomal subunit protein uS11.